Here is a 651-residue protein sequence, read N- to C-terminus: BTB/POZ domain-containing protein At3g44820 (651 aa).

The BTB domain maps to 25–96 (SDITVVVDDV…CYGARVDITS (72 aa)). The region spanning 211–509 (DWWYEDISYL…LQVLFFEQMH (299 aa)) is the NPH3 domain. The tract at residues 611–651 (DAKNDTVQNSVSSTPRSATADHTLPRSSRHSKHRKSFSFFG) is disordered. Positions 615-627 (DTVQNSVSSTPRS) are enriched in polar residues. A compositionally biased stretch (basic residues) spans 637-651 (SSRHSKHRKSFSFFG).

The protein belongs to the NPH3 family.

The protein operates within protein modification; protein ubiquitination. Functionally, may act as a substrate-specific adapter of an E3 ubiquitin-protein ligase complex (CUL3-RBX1-BTB) which mediates the ubiquitination and subsequent proteasomal degradation of target proteins. This chain is BTB/POZ domain-containing protein At3g44820, found in Arabidopsis thaliana (Mouse-ear cress).